Here is a 664-residue protein sequence, read N- to C-terminus: Translation factor guf1, mitochondrial (664 aa).

The N-terminal 43 residues, 1–43 (MRGCLQLARWLSAGPKCPAASLPKAPSGLYNTIRSFTSSAQLA), are a transit peptide targeting the mitochondrion. A tr-type G domain is found at 66–246 (DRYRNFCIVA…TVVEKIPAPV (181 aa)). GTP is bound by residues 75–82 (AHVDHGKS), 139–143 (DTPGH), and 193–196 (NKVD).

The protein belongs to the TRAFAC class translation factor GTPase superfamily. Classic translation factor GTPase family. LepA subfamily.

The protein resides in the mitochondrion inner membrane. The enzyme catalyses GTP + H2O = GDP + phosphate + H(+). In terms of biological role, promotes mitochondrial protein synthesis. May act as a fidelity factor of the translation reaction, by catalyzing a one-codon backward translocation of tRNAs on improperly translocated ribosomes. Binds to mitochondrial ribosomes in a GTP-dependent manner. The protein is Translation factor guf1, mitochondrial (guf1) of Aspergillus oryzae (strain ATCC 42149 / RIB 40) (Yellow koji mold).